The primary structure comprises 189 residues: Probable nicotinate-nucleotide adenylyltransferase (189 aa).

Belongs to the NadD family.

The enzyme catalyses nicotinate beta-D-ribonucleotide + ATP + H(+) = deamido-NAD(+) + diphosphate. It participates in cofactor biosynthesis; NAD(+) biosynthesis; deamido-NAD(+) from nicotinate D-ribonucleotide: step 1/1. Functionally, catalyzes the reversible adenylation of nicotinate mononucleotide (NaMN) to nicotinic acid adenine dinucleotide (NaAD). In Bacillus licheniformis (strain ATCC 14580 / DSM 13 / JCM 2505 / CCUG 7422 / NBRC 12200 / NCIMB 9375 / NCTC 10341 / NRRL NRS-1264 / Gibson 46), this protein is Probable nicotinate-nucleotide adenylyltransferase.